A 135-amino-acid polypeptide reads, in one-letter code: uncharacterized protein (135 aa).

The helical transmembrane segment at 4–24 threads the bilayer; that stretch reads LGVFLILASIVCGVVAICGCT.

It is found in the membrane. This is an uncharacterized protein from Methanocaldococcus jannaschii (strain ATCC 43067 / DSM 2661 / JAL-1 / JCM 10045 / NBRC 100440) (Methanococcus jannaschii).